A 234-amino-acid polypeptide reads, in one-letter code: uncharacterized protein (234 aa).

The tract at residues 212 to 234 (GKHLKLDSNTTENKTTKQNETGG) is disordered. A compositionally biased stretch (low complexity) spans 220–234 (NTTENKTTKQNETGG).

This is an uncharacterized protein from Methanothermobacter thermautotrophicus (Methanobacterium thermoformicicum).